An 804-amino-acid polypeptide reads, in one-letter code: Cas scaffolding protein family member 4 (804 aa).

Residues 11–73 enclose the SH3 domain; sequence PKTLLARALY…PANRLQVLRE (63 aa). Phosphoserine occurs at positions 200 and 297. 3 disordered regions span residues 369 to 395, 607 to 628, and 642 to 686; these read LERGREAPENSPWISGQTSFLSPDSDR, QRETESYQESSPFDRQPTTEHS, and QQSP…TERK. Positions 380–390 are enriched in polar residues; sequence PWISGQTSFLS. Residues 649–664 show a composition bias toward basic and acidic residues; the sequence is EKGKPTMEGKSNRNPD.

Belongs to the CAS family. In terms of assembly, interacts (via SH3 domain) with PTK2/FAK1 (via C-terminus). Post-translationally, phosphorylated on tyrosines by SRC.

The protein localises to the cytoplasm. Its subcellular location is the cytoskeleton. It localises to the cell junction. The protein resides in the focal adhesion. Its function is as follows. Docking protein that plays a role in tyrosine kinase-based signaling related to cell adhesion and cell spreading. Regulates PTK2/FAK1 activity, focal adhesion integrity, and cell spreading. This Mus musculus (Mouse) protein is Cas scaffolding protein family member 4.